The primary structure comprises 287 residues: Pol-RFamide neuropeptides (287 aa).

The first 21 residues, 1–21 (MNLITLLVLGVSTCLIYGIEA), serve as a signal peptide directing secretion. A propeptide spanning residues 22 to 52 (DEKTSSALENEIVEILNGNFKNEKKSIETSD) is cleaved from the precursor. Residue Gln53 is modified to Pyrrolidone carboxylic acid. Phe59 carries the phenylalanine amide modification. The propeptide occupies 62-64 (EVN). At Gln65 the chain carries Pyrrolidone carboxylic acid. A Phenylalanine amide modification is found at Phe71. A propeptide spanning residues 74–77 (ELSD) is cleaved from the precursor. Gln78 is subject to Pyrrolidone carboxylic acid. Phe84 carries the post-translational modification Phenylalanine amide. A propeptide spanning residues 87–90 (ELSD) is cleaved from the precursor. At Gln91 the chain carries Pyrrolidone carboxylic acid. At Phe97 the chain carries Phenylalanine amide. A propeptide spanning residues 100–103 (EVLD) is cleaved from the precursor. A Pyrrolidone carboxylic acid modification is found at Gln104. Residue Phe110 is modified to Phenylalanine amide. Residues 113–116 (DASN) constitute a propeptide that is removed on maturation. Gln117 is subject to Pyrrolidone carboxylic acid. The residue at position 123 (Phe123) is a Phenylalanine amide. A propeptide spanning residues 126–129 (ELSD) is cleaved from the precursor. A Pyrrolidone carboxylic acid modification is found at Gln130. Position 136 is a phenylalanine amide (Phe136). A propeptide spanning residues 139 to 142 (EGSN) is cleaved from the precursor. Gln143 is subject to Pyrrolidone carboxylic acid. Phenylalanine amide is present on Phe149. A propeptide spanning residues 152 to 168 (EASKNDLEKQNGRGDSD) is cleaved from the precursor. Residue Gln169 is modified to Pyrrolidone carboxylic acid. A Phenylalanine amide modification is found at Phe175. Residues 178-181 (EARK) constitute a propeptide that is removed on maturation. Gln182 carries the post-translational modification Pyrrolidone carboxylic acid. Phe188 carries the phenylalanine amide modification. Residues 192-194 (DMN) constitute a propeptide that is removed on maturation. Gln195 is modified (pyrrolidone carboxylic acid). His201 carries the post-translational modification Histidine amide. Residues 204 to 207 (ETSD) constitute a propeptide that is removed on maturation. The residue at position 208 (Gln208) is a Pyrrolidone carboxylic acid. Phe214 is subject to Phenylalanine amide. The propeptide occupies 217–220 (QLSD). Gln221 carries the post-translational modification Pyrrolidone carboxylic acid. The residue at position 227 (Phe227) is a Phenylalanine amide. Residues 229-267 (REVKNDKNNPFRSRYTGDSTQLQRENNQPIEELRDNTEK) are disordered. A propeptide spanning residues 230-287 (EVKNDKNNPFRSRYTGDSTQLQRENNQPIEELRDNTEKVSIENKPIMKKTSVKISKTV) is cleaved from the precursor. Positions 238–257 (PFRSRYTGDSTQLQRENNQP) are enriched in polar residues.

This sequence belongs to the FARP (FMRFamide related peptide) family. Post-translationally, the N-terminal processing sites of the Pol-RFamide peptides are acidic suggesting that cniderian nervous systems may use a variety of unconventional processing procedures.

The protein resides in the secreted. Functionally, has direct action on motoneurons, and effect includes transient inhibition followed by prolonged excitation. This is Pol-RFamide neuropeptides from Polyorchis penicillatus (Hydromedusa).